A 180-amino-acid polypeptide reads, in one-letter code: tRNA (cytidine(56)-2'-O)-methyltransferase (180 aa).

L85 contacts S-adenosyl-L-methionine.

The protein belongs to the aTrm56 family. Homodimer.

Its subcellular location is the cytoplasm. It carries out the reaction cytidine(56) in tRNA + S-adenosyl-L-methionine = 2'-O-methylcytidine(56) in tRNA + S-adenosyl-L-homocysteine + H(+). Functionally, specifically catalyzes the AdoMet-dependent 2'-O-ribose methylation of cytidine at position 56 in tRNAs. In Methanobrevibacter smithii (strain ATCC 35061 / DSM 861 / OCM 144 / PS), this protein is tRNA (cytidine(56)-2'-O)-methyltransferase.